A 352-amino-acid polypeptide reads, in one-letter code: 2'-dehydrokanamycin reductase (352 aa).

This sequence belongs to the NAD(P)-dependent epimerase/dehydratase family.

It catalyses the reaction 2'-dehydrokanamycin A + NADPH + H(+) = kanamycin A + NADP(+). It participates in antibiotic biosynthesis; kanamycin biosynthesis. Mediates the conversion of 2'-dehydrokanamycin A into kanamycin A. The polypeptide is 2'-dehydrokanamycin reductase (kanK) (Streptomyces kanamyceticus).